We begin with the raw amino-acid sequence, 296 residues long: Lipoyl synthase (296 aa).

7 residues coordinate [4Fe-4S] cluster: C34, C39, C45, C60, C64, C67, and S276. Positions 46-265 constitute a Radical SAM core domain; sequence WGEGTATFMI…GEVALSMGFK (220 aa).

The protein belongs to the radical SAM superfamily. Lipoyl synthase family. It depends on [4Fe-4S] cluster as a cofactor.

It localises to the cytoplasm. It catalyses the reaction [[Fe-S] cluster scaffold protein carrying a second [4Fe-4S](2+) cluster] + N(6)-octanoyl-L-lysyl-[protein] + 2 oxidized [2Fe-2S]-[ferredoxin] + 2 S-adenosyl-L-methionine + 4 H(+) = [[Fe-S] cluster scaffold protein] + N(6)-[(R)-dihydrolipoyl]-L-lysyl-[protein] + 4 Fe(3+) + 2 hydrogen sulfide + 2 5'-deoxyadenosine + 2 L-methionine + 2 reduced [2Fe-2S]-[ferredoxin]. It participates in protein modification; protein lipoylation via endogenous pathway; protein N(6)-(lipoyl)lysine from octanoyl-[acyl-carrier-protein]: step 2/2. Its function is as follows. Catalyzes the radical-mediated insertion of two sulfur atoms into the C-6 and C-8 positions of the octanoyl moiety bound to the lipoyl domains of lipoate-dependent enzymes, thereby converting the octanoylated domains into lipoylated derivatives. The sequence is that of Lipoyl synthase from Pyrobaculum arsenaticum (strain DSM 13514 / JCM 11321 / PZ6).